Reading from the N-terminus, the 474-residue chain is Glutamine synthetase (474 aa).

Positions 14–99 (EKIELIDLKF…VCSIKEPRTG (86 aa)) constitute a GS beta-grasp domain. The GS catalytic domain occupies 106–474 (PRVIAQKAID…PYEFSIYYDV (369 aa)). Positions 131 and 133 each coordinate Mg(2+). ATP is bound at residue E211. Mg(2+) contacts are provided by E216 and E224. L-glutamate-binding positions include 268 to 269 (NG) and G269. H273 is a binding site for Mg(2+). Residues 275 to 277 (HQS) and S277 each bind ATP. Positions 325, 331, and 343 each coordinate L-glutamate. ATP contacts are provided by R343, R348, and K357. Position 362 (E362) interacts with Mg(2+). R364 is a binding site for L-glutamate. Y402 is subject to O-AMP-tyrosine.

It belongs to the glutamine synthetase family. As to quaternary structure, oligomer of 12 subunits arranged in the form of two hexagons. Requires Mg(2+) as cofactor.

It is found in the cytoplasm. It carries out the reaction L-glutamate + NH4(+) + ATP = L-glutamine + ADP + phosphate + H(+). Its activity is regulated as follows. The activity of this enzyme could be controlled by adenylation under conditions of abundant glutamine. Its function is as follows. Involved in nitrogen metabolism via ammonium assimilation. Catalyzes the ATP-dependent biosynthesis of glutamine from glutamate and ammonia. This Nostoc sp. (strain PCC 7120 / SAG 25.82 / UTEX 2576) protein is Glutamine synthetase.